A 342-amino-acid polypeptide reads, in one-letter code: [Citrate [pro-3S]-lyase] ligase (342 aa).

One can recognise an N-acetyltransferase domain in the interval 1–127 (MTLILKRVQL…RAVLMENSRE (127 aa)).

It catalyses the reaction holo-[citrate lyase ACP] + acetate + ATP = acetyl-[citrate lyase ACP] + AMP + diphosphate. Its function is as follows. Acetylation of prosthetic group (2-(5''-phosphoribosyl)-3'-dephosphocoenzyme-A) of the gamma subunit of citrate lyase. This chain is [Citrate [pro-3S]-lyase] ligase (citC), found in Klebsiella pneumoniae.